Consider the following 193-residue polypeptide: Rho-related GTP-binding protein RhoA-A (193 aa).

Residues 12-19, 30-37, 59-63, 117-120, and 160-162 contribute to the GTP site; these read GDGACGKT, FPEVYVPT, DTAGQ, NKKD, and SAK. Residue Tyr34 is glycosylated ((Microbial infection) O-linked (GlcNAc) tyrosine; by Yersinia Afp18). A Cysteine methyl ester modification is found at Cys190. A lipid anchor (S-geranylgeranyl cysteine) is attached at Cys190. Positions 191–193 are cleaved as a propeptide — removed in mature form; sequence ALL.

It belongs to the small GTPase superfamily. Rho family. (Microbial infection) Glycosylated at Tyr-34 by Yersinia ruckeri toxin Afp18. Mono-O-GlcNAcylation by Afp18 inhibits RhoA activation by guanine nucleotide exchange factors and blocks RhoA signaling.

It is found in the cell membrane. Regulates a signal transduction pathway linking plasma membrane receptors to the assembly of focal adhesions and actin stress fibers. The protein is Rho-related GTP-binding protein RhoA-A of Danio rerio (Zebrafish).